The following is a 357-amino-acid chain: UDP-N-acetylglucosamine--N-acetylmuramyl-(pentapeptide) pyrophosphoryl-undecaprenol N-acetylglucosamine transferase (357 aa).

Residues 15–17 (SGG), Asn-125, Ser-190, and Gln-290 contribute to the UDP-N-acetyl-alpha-D-glucosamine site.

The protein belongs to the glycosyltransferase 28 family. MurG subfamily.

The protein localises to the cell inner membrane. The catalysed reaction is di-trans,octa-cis-undecaprenyl diphospho-N-acetyl-alpha-D-muramoyl-L-alanyl-D-glutamyl-meso-2,6-diaminopimeloyl-D-alanyl-D-alanine + UDP-N-acetyl-alpha-D-glucosamine = di-trans,octa-cis-undecaprenyl diphospho-[N-acetyl-alpha-D-glucosaminyl-(1-&gt;4)]-N-acetyl-alpha-D-muramoyl-L-alanyl-D-glutamyl-meso-2,6-diaminopimeloyl-D-alanyl-D-alanine + UDP + H(+). It functions in the pathway cell wall biogenesis; peptidoglycan biosynthesis. Its function is as follows. Cell wall formation. Catalyzes the transfer of a GlcNAc subunit on undecaprenyl-pyrophosphoryl-MurNAc-pentapeptide (lipid intermediate I) to form undecaprenyl-pyrophosphoryl-MurNAc-(pentapeptide)GlcNAc (lipid intermediate II). This is UDP-N-acetylglucosamine--N-acetylmuramyl-(pentapeptide) pyrophosphoryl-undecaprenol N-acetylglucosamine transferase from Chlamydia pneumoniae (Chlamydophila pneumoniae).